Reading from the N-terminus, the 378-residue chain is GDP-mannose-dependent alpha-mannosyltransferase (378 aa).

It belongs to the glycosyltransferase group 1 family. Glycosyltransferase 4 subfamily.

It functions in the pathway phospholipid metabolism; phosphatidylinositol metabolism. Its function is as follows. Catalyzes the addition of a mannose residue from GDP-D-mannose to GlcAGroAc2 to generate 1,2-di-O-C16/C18:1-(alpha-D-mannopyranosyl)-(1-4)-(alpha-D-glucopyranosyluronic acid)-(1-3)-glycerol(ManGlcAGroAc2). The sequence is that of GDP-mannose-dependent alpha-mannosyltransferase (mgtA) from Mycobacterium tuberculosis (strain CDC 1551 / Oshkosh).